We begin with the raw amino-acid sequence, 205 residues long: Small ribosomal subunit protein uS4 (205 aa).

The tract at residues 18–49 is disordered; that stretch reads NIWGRPKSPVNKREYGPGQHGQRRKGKLSDFG. Residues 94–157 form the S4 RNA-binding domain; that stretch reads RRLDTVVYRA…KQLALVLEAN (64 aa).

This sequence belongs to the universal ribosomal protein uS4 family. Part of the 30S ribosomal subunit. Contacts protein S5. The interaction surface between S4 and S5 is involved in control of translational fidelity.

Functionally, one of the primary rRNA binding proteins, it binds directly to 16S rRNA where it nucleates assembly of the body of the 30S subunit. With S5 and S12 plays an important role in translational accuracy. The chain is Small ribosomal subunit protein uS4 from Nitrobacter hamburgensis (strain DSM 10229 / NCIMB 13809 / X14).